The sequence spans 357 residues: Phosphoribosylformylglycinamidine cyclo-ligase (357 aa).

Belongs to the AIR synthase family.

The protein localises to the cytoplasm. It catalyses the reaction 2-formamido-N(1)-(5-O-phospho-beta-D-ribosyl)acetamidine + ATP = 5-amino-1-(5-phospho-beta-D-ribosyl)imidazole + ADP + phosphate + H(+). It functions in the pathway purine metabolism; IMP biosynthesis via de novo pathway; 5-amino-1-(5-phospho-D-ribosyl)imidazole from N(2)-formyl-N(1)-(5-phospho-D-ribosyl)glycinamide: step 2/2. This Rhizobium leguminosarum protein is Phosphoribosylformylglycinamidine cyclo-ligase.